A 444-amino-acid polypeptide reads, in one-letter code: Tubulin beta 8B (444 aa).

Residues 1-4 carry the MREI motif motif; that stretch reads MREI. 6 residues coordinate GTP: Gln-11, Glu-69, Ser-138, Gly-142, Thr-143, and Gly-144. Mg(2+) is bound at residue Glu-69. Position 172 is a phosphoserine; by CDK1 (Ser-172). GTP is bound by residues Asn-204 and Asn-226. Residues 421–444 are disordered; sequence EYQQYQDATAEEEEDEEYAEEEVA. Acidic residues predominate over residues 429–444; the sequence is TAEEEEDEEYAEEEVA. Residue Glu-436 is modified to 5-glutamyl polyglutamate.

The protein belongs to the tubulin family. Dimer of alpha and beta chains. A typical microtubule is a hollow water-filled tube with an outer diameter of 25 nm and an inner diameter of 15 nM. Alpha-beta heterodimers associate head-to-tail to form protofilaments running lengthwise along the microtubule wall with the beta-tubulin subunit facing the microtubule plus end conferring a structural polarity. Microtubules usually have 13 protofilaments but different protofilament numbers can be found in some organisms and specialized cells. It depends on Mg(2+) as a cofactor. Post-translationally, some glutamate residues at the C-terminus are polyglutamylated, resulting in polyglutamate chains on the gamma-carboxyl group. Polyglutamylation plays a key role in microtubule severing by spastin (SPAST). SPAST preferentially recognizes and acts on microtubules decorated with short polyglutamate tails: severing activity by SPAST increases as the number of glutamates per tubulin rises from one to eight, but decreases beyond this glutamylation threshold. Glutamylation is also involved in cilia motility. Some glutamate residues at the C-terminus are monoglycylated but not polyglycylated due to the absence of functional TTLL10 in human. Monoglycylation is mainly limited to tubulin incorporated into cilia and flagella axonemes, which is required for their stability and maintenance. Flagella glycylation controls sperm motility. Both polyglutamylation and monoglycylation can coexist on the same protein on adjacent residues, and lowering glycylation levels increases polyglutamylation, and reciprocally. In terms of processing, phosphorylated on Ser-172 by CDK1 during the cell cycle, from metaphase to telophase, but not in interphase. This phosphorylation inhibits tubulin incorporation into microtubules.

It is found in the cytoplasm. Its subcellular location is the cytoskeleton. Tubulin is the major constituent of microtubules, a cylinder consisting of laterally associated linear protofilaments composed of alpha- and beta-tubulin heterodimers. Microtubules grow by the addition of GTP-tubulin dimers to the microtubule end, where a stabilizing cap forms. Below the cap, tubulin dimers are in GDP-bound state, owing to GTPase activity of alpha-tubulin. The sequence is that of Tubulin beta 8B from Homo sapiens (Human).